The primary structure comprises 51 residues: Large ribosomal subunit protein eL39 (51 aa).

It belongs to the eukaryotic ribosomal protein eL39 family.

In terms of biological role, binds specifically to a region in 26S rRNA near the subunit interface. The protein is Large ribosomal subunit protein eL39 (rpl39e) of Sulfolobus acidocaldarius (strain ATCC 33909 / DSM 639 / JCM 8929 / NBRC 15157 / NCIMB 11770).